A 129-amino-acid chain; its full sequence is MSNVPAELKYSKEHEWLRKEADGTYTVGITEHAQELLGDMVFVDLPDVGTTVSAGDDCAVAESVKAASDIYAPVSGEIVAVNDALSDSPELVNSDPYTDGWIFKIRAADEAEVEALLDATAYAALLENE.

In terms of domain architecture, Lipoyl-binding spans 24-106 (TYTVGITEHA…YTDGWIFKIR (83 aa)). An N6-lipoyllysine modification is found at lysine 65.

It belongs to the GcvH family. In terms of assembly, the glycine cleavage system is composed of four proteins: P, T, L and H. It depends on (R)-lipoate as a cofactor.

Its function is as follows. The glycine cleavage system catalyzes the degradation of glycine. The H protein shuttles the methylamine group of glycine from the P protein to the T protein. This is Glycine cleavage system H protein from Enterobacter sp. (strain 638).